The sequence spans 339 residues: tRNA N6-adenosine threonylcarbamoyltransferase (339 aa).

Residues His111 and His115 each contribute to the Fe cation site. Residues 139-143, Asp172, Gly185, Asp189, and Asn280 contribute to the substrate site; that span reads LVSGG. Asp308 is a binding site for Fe cation.

The protein belongs to the KAE1 / TsaD family. It depends on Fe(2+) as a cofactor.

It is found in the cytoplasm. It carries out the reaction L-threonylcarbamoyladenylate + adenosine(37) in tRNA = N(6)-L-threonylcarbamoyladenosine(37) in tRNA + AMP + H(+). Required for the formation of a threonylcarbamoyl group on adenosine at position 37 (t(6)A37) in tRNAs that read codons beginning with adenine. Is involved in the transfer of the threonylcarbamoyl moiety of threonylcarbamoyl-AMP (TC-AMP) to the N6 group of A37, together with TsaE and TsaB. TsaD likely plays a direct catalytic role in this reaction. In Phocaeicola vulgatus (strain ATCC 8482 / DSM 1447 / JCM 5826 / CCUG 4940 / NBRC 14291 / NCTC 11154) (Bacteroides vulgatus), this protein is tRNA N6-adenosine threonylcarbamoyltransferase.